Consider the following 275-residue polypeptide: MVISDYFEIERAYAKLNLYLDVLSKRPDGYHNITGLFQTIDLHDELEISQIDKRGEVRIETNIEIQGTNLIEKAFRTVEKFYNVGFGIKVRLKKNIPMGSGLGGGSSDAAAVLRFLGRKLKISIKDLLILAAEVGSDVPFLIVGGTAIVEGRGEKVTFLNPISDYRVDLFCPTISVSTKFAYQMIHESTYAKKPDFALKLYEAYLKRDHNQIKALSYNVFQEIMTSKYPQIQDALDKAQRCNPIVAMMTGSGSCIFAVQADKGKYRFIEDVFQHL.

Residue K15 is part of the active site. ATP is bound at residue 97-107 (PMGSGLGGGSS). Residue D137 is part of the active site.

Belongs to the GHMP kinase family. IspE subfamily.

The enzyme catalyses 4-CDP-2-C-methyl-D-erythritol + ATP = 4-CDP-2-C-methyl-D-erythritol 2-phosphate + ADP + H(+). It functions in the pathway isoprenoid biosynthesis; isopentenyl diphosphate biosynthesis via DXP pathway; isopentenyl diphosphate from 1-deoxy-D-xylulose 5-phosphate: step 3/6. Functionally, catalyzes the phosphorylation of the position 2 hydroxy group of 4-diphosphocytidyl-2C-methyl-D-erythritol. This chain is 4-diphosphocytidyl-2-C-methyl-D-erythritol kinase, found in Pseudothermotoga lettingae (strain ATCC BAA-301 / DSM 14385 / NBRC 107922 / TMO) (Thermotoga lettingae).